An 89-amino-acid polypeptide reads, in one-letter code: Exodeoxyribonuclease 7 small subunit (89 aa).

The interval 1-22 (MRKKSSSNKEETALHPPPENFE) is disordered.

It belongs to the XseB family. In terms of assembly, heterooligomer composed of large and small subunits.

Its subcellular location is the cytoplasm. It carries out the reaction Exonucleolytic cleavage in either 5'- to 3'- or 3'- to 5'-direction to yield nucleoside 5'-phosphates.. Functionally, bidirectionally degrades single-stranded DNA into large acid-insoluble oligonucleotides, which are then degraded further into small acid-soluble oligonucleotides. This Nitrosomonas europaea (strain ATCC 19718 / CIP 103999 / KCTC 2705 / NBRC 14298) protein is Exodeoxyribonuclease 7 small subunit.